The chain runs to 387 residues: 8-amino-7-oxononanoate synthase (387 aa).

Arg-20 contributes to the substrate binding site. 107-108 (GY) is a pyridoxal 5'-phosphate binding site. Residue His-132 coordinates substrate. The pyridoxal 5'-phosphate site is built by Ser-181, His-209, and Thr-238. Lys-241 is subject to N6-(pyridoxal phosphate)lysine. Thr-355 lines the substrate pocket.

It belongs to the class-II pyridoxal-phosphate-dependent aminotransferase family. BioF subfamily. In terms of assembly, homodimer. Pyridoxal 5'-phosphate is required as a cofactor.

The enzyme catalyses 6-carboxyhexanoyl-[ACP] + L-alanine + H(+) = (8S)-8-amino-7-oxononanoate + holo-[ACP] + CO2. It participates in cofactor biosynthesis; biotin biosynthesis. In terms of biological role, catalyzes the decarboxylative condensation of pimeloyl-[acyl-carrier protein] and L-alanine to produce 8-amino-7-oxononanoate (AON), [acyl-carrier protein], and carbon dioxide. This chain is 8-amino-7-oxononanoate synthase, found in Dechloromonas aromatica (strain RCB).